Here is a 317-residue protein sequence, read N- to C-terminus: MPVQGSQRRLLGSLNSTPTATPRLGLAANQTGARCLEVSIPDGLFLSLGLVSLVENVLVVVAIARNRNLHSPMYCFICCLALSDLLVSGSNMLETAVILLLEAGALAARAAVVQQLDNVIDVITCSSMLSSLCFLGAIAVDRYISIFYALRYHSIVTLRRARRVVAAIWVASVLFSTLFIAYCDHAAVLLSLVVFFLAMLVLMAVLYVHMLARACQHAQGIAQLHKRQRPAHQGVGLKGAATLTILLGIFFLCWGPFFLHLTLIVLCPQHPTCSCIFKNFNLFLTLIICNAIIDPLIYAFRSQELRRTLKKVLLCSW.

Topologically, residues Met1 to Glu37 are extracellular. N-linked (GlcNAc...) asparagine glycosylation is present at Asn29. The helical transmembrane segment at Val38–Ile63 threads the bilayer. At Ala64–Pro72 the chain is on the cytoplasmic side. Residues Met73–Leu93 traverse the membrane as a helical segment. Over Glu94–Asn118 the chain is Extracellular. The helical transmembrane segment at Val119–Val140 threads the bilayer. At Asp141 to Arg163 the chain is on the cytoplasmic side. A helical membrane pass occupies residues Val164–Cys183. Over Asp184–Ser191 the chain is Extracellular. The chain crosses the membrane as a helical span at residues Leu192 to Leu211. Topologically, residues Ala212–Ala240 are cytoplasmic. The helical transmembrane segment at Ala241–Leu266 threads the bilayer. Over Cys267–Asn279 the chain is Extracellular. The chain crosses the membrane as a helical span at residues Phe280–Phe300. Residues Arg301–Trp317 lie on the Cytoplasmic side of the membrane. Residue Cys315 is the site of S-palmitoyl cysteine attachment.

This sequence belongs to the G-protein coupled receptor 1 family. Interacts with MGRN1, but does not undergo MGRN1-mediated ubiquitination; this interaction competes with GNAS-binding and thus inhibits agonist-induced cAMP production. Interacts with OPN3; the interaction results in a decrease in MC1R-mediated cAMP signaling and ultimately a decrease in melanin production in melanocytes.

It is found in the cell membrane. Receptor for MSH (alpha, beta and gamma) and ACTH. The activity of this receptor is mediated by G proteins which activate adenylate cyclase. Mediates melanogenesis, the production of eumelanin (black/brown) and phaeomelanin (red/yellow), via regulation of cAMP signaling in melanocytes. In Trachypithecus auratus (Javan langur), this protein is Melanocyte-stimulating hormone receptor (MC1R).